The primary structure comprises 158 residues: MSDDEHHFESSDAGASKTYPQQAGNIRKGGHIVIKGRPCKVVEVSTSKTGKHGHAKCHFVAIDIFTSKKLEDIVPSSHNCDVPHVNRVDYQLIDISEDGFVSLLTDNGSTKDDLKLPTDEALLTQLKNGFEEGKDIVVSVMSAMGEEQMCALKEVGPK.

Over residues 1–10 the composition is skewed to basic and acidic residues; it reads MSDDEHHFES. Residues 1-23 form a disordered region; that stretch reads MSDDEHHFESSDAGASKTYPQQA. The residue at position 2 (Ser2) is a Phosphoserine. The residue at position 51 (Lys51) is a Hypusine.

The protein belongs to the eIF-5A family. Post-translationally, lys-52 undergoes hypusination, a unique post-translational modification that consists in the addition of a butylamino group from spermidine to lysine side chain, leading to the formation of the unusual amino acid hypusine. eIF-5As are the only known proteins to undergo this modification, which is essential for their function. As to expression, expressed in the vascular tissues of roots, stems and leaves. Localized in phloem companion cells rather than sieve-tube members. Not expressed in xylem or procambium. Detected in root tips and in the chalazal tissue of fertilized ovules.

Translation factor that promotes translation elongation and termination, particularly upon ribosome stalling at specific amino acid sequence contexts. Binds between the exit (E) and peptidyl (P) site of the ribosome and promotes rescue of stalled ribosome: specifically required for efficient translation of polyproline-containing peptides as well as other motifs that stall the ribosome. Acts as a ribosome quality control (RQC) cofactor by joining the RQC complex to facilitate peptidyl transfer during CAT tailing step. Involved in supporting growth and plays a regulatory role in the response to sub-lethal osmotic and nutrient stress. The sequence is that of Eukaryotic translation initiation factor 5A-3 (ELF5A-3) from Arabidopsis thaliana (Mouse-ear cress).